The sequence spans 197 residues: Signal peptidase complex catalytic subunit SEC11 (197 aa).

The Cytoplasmic portion of the chain corresponds to 1–14; it reads MLSSLAPYMANPRQ. A helical; Signal-anchor for type II membrane protein transmembrane segment spans residues 15–33; it reads TLTQVLNFALVLSTAFMLW. Over 34–197 the chain is Lumenal; that stretch reads KGLSVITNST…MGLMVVLQRE (164 aa). N-linked (GlcNAc...) asparagine glycosylation occurs at N41. Catalysis depends on charge relay system residues S53 and H92. A compositionally biased stretch (basic and acidic residues) spans 102–115; sequence PGREDKKNVKKGGE. Positions 102–134 are disordered; it reads PGREDKKNVKKGGEEGEETSSTPSQKLLTKGDN. D139 serves as the catalytic Charge relay system. The interval 183–194 is C-terminal short (CTS) helix; it reads VLLGFMGLMVVL.

It belongs to the peptidase S26B family. In terms of assembly, component of the signal peptidase complex (SPC) composed of a catalytic subunit SEC11 and three accessory subunits SPC1, SPC2 and SPC3. The complex induces a local thinning of the ER membrane which is used to measure the length of the signal peptide (SP) h-region of protein substrates. This ensures the selectivity of the complex towards h-regions shorter than 18-20 amino acids. SPC associates with the translocon complex.

It is found in the endoplasmic reticulum membrane. It catalyses the reaction Cleavage of hydrophobic, N-terminal signal or leader sequences from secreted and periplasmic proteins.. Catalytic component of the signal peptidase complex (SPC) which catalyzes the cleavage of N-terminal signal sequences from nascent proteins as they are translocated into the lumen of the endoplasmic reticulum. Specifically cleaves N-terminal signal peptides that contain a hydrophobic alpha-helix (h-region) shorter than 18-20 amino acids. The protein is Signal peptidase complex catalytic subunit SEC11 (SEC11) of Paracoccidioides brasiliensis (strain Pb18).